A 310-amino-acid chain; its full sequence is Signal peptidase I (310 aa).

A helical transmembrane segment spans residues 5-25 (LSSFLLASSLITGTLWIINKI). Residues 26–57 (LSHNLLDSKIPFNIKKSKIYYKSKQVVQTFAS) lie on the Cytoplasmic side of the membrane. Residues 58–78 (FFPILIIVFIIRTFICEPFQI) traverse the membrane as a helical segment. The Extracellular portion of the chain corresponds to 79–310 (PSESMMPTLL…IQFDRIGNIY (232 aa)). Residues S82 and K137 contribute to the active site.

It belongs to the peptidase S26 family.

The protein resides in the cell membrane. The enzyme catalyses Cleavage of hydrophobic, N-terminal signal or leader sequences from secreted and periplasmic proteins.. The polypeptide is Signal peptidase I (lepB) (Buchnera aphidicola subsp. Baizongia pistaciae (strain Bp)).